A 1461-amino-acid chain; its full sequence is Calmodulin-regulated spectrin-associated protein 2 (1461 aa).

Residues 211 to 324 (PGGQKARYRK…FMAELFWWFE (114 aa)) form the Calponin-homology (CH) domain. The disordered stretch occupies residues 361 to 389 (RDSSSSSDFSSRYTRPQTHSSASGGIRRS). Composition is skewed to low complexity over residues 362-371 (DSSSSSDFSS) and 380-389 (SSASGGIRRS). 2 positions are modified to phosphoserine: serine 391 and serine 393. Position 401 is a phosphothreonine (threonine 401). Phosphoserine occurs at positions 439, 572, 573, 585, and 647. Disordered regions lie at residues 573–613 (SPDN…EDSS) and 639–704 (ASNP…GSEL). Threonine 652 is modified (phosphothreonine). At serine 654 the chain carries Phosphoserine. Over residues 654–673 (STKSQPGSSASSSSGVKMTS) the composition is skewed to low complexity. A compositionally biased stretch (basic and acidic residues) spans 677 to 687 (QKFRKLNHTDG). Residues 730-767 (LLASEMVHLRMRLEEKRRAIEAQKKKMEAAFTKQRQKM) adopt a coiled-coil conformation. Residues 787–826 (REEAAGAEDEKVYTDRAKERESQKMDGQRSKSLADIKESM) show a composition bias toward basic and acidic residues. The tract at residues 787 to 855 (REEAAGAEDE…QWNLTSPSEE (69 aa)) is disordered. Serine 836 is modified (phosphoserine). Positions 861 to 900 (EILEYTKSIEKLNSSLHFLQQEMQRLSLQQEMLMQMREQQ) form a coiled coil. An MBD region region spans residues 896 to 1007 (MREQQAWVIS…IQTRSFVCFG (112 aa)). Serine 905 and serine 910 each carry phosphoserine. 5 disordered regions span residues 921–992 (RQAG…RRFS), 1004–1044 (VCFG…GEKE), 1069–1090 (NEDQ…PTAP), 1102–1124 (DLKP…DKEQ), and 1163–1321 (KETQ…EYTG). The segment covering 926–937 (SSAAAPFSSDSP) has biased composition (low complexity). Over residues 943-962 (SPQSSTRKSASFSVKNQRTP) the composition is skewed to polar residues. A phosphothreonine mark is found at threonine 970, threonine 975, and threonine 977. Serine 981 and serine 992 each carry phosphoserine. Over residues 1011–1028 (EPQKEPKQKEEIKKEPSE) the composition is skewed to basic and acidic residues. Positions 1077 to 1089 (TEPPPKPVFPPTA) are enriched in pro residues. Basic and acidic residues-rich tracts occupy residues 1104–1124 (KPPE…DKEQ) and 1163–1224 (KETQ…DTVI). Phosphoserine is present on serine 1120. Positions 1138–1210 (KDDQKAENDM…REFIRQEYMR (73 aa)) form a coiled coil. Residues 1259–1271 (SSLSLASLNTGDS) show a composition bias toward polar residues. 3 positions are modified to phosphoserine: serine 1285, serine 1291, and serine 1293. Over residues 1306–1318 (NASTTSSVASGTE) the composition is skewed to polar residues. The CKK domain occupies 1321 to 1455 (GPKLYKEPSA…QTKRPVTPKK (135 aa)).

The protein belongs to the CAMSAP1 family. In terms of assembly, interacts with CAMSAP3. Interacts with KATNA1 and KATNB1; leading to regulate the length of CAMSAP2-decorated microtubule stretches. Interacts with a complex formed by AKAP9 and PDE4DIP isoform 2/MMG8/SMYLE, which recruits CAMSAP2 to the Golgi. Interacts with MAPRE1/EB1.

It is found in the cytoplasm. It localises to the cytoskeleton. The protein resides in the golgi apparatus. Its subcellular location is the cilium basal body. In terms of biological role, key microtubule-organizing protein that specifically binds the minus-end of non-centrosomal microtubules and regulates their dynamics and organization. Specifically recognizes growing microtubule minus-ends and autonomously decorates and stabilizes microtubule lattice formed by microtubule minus-end polymerization. Acts on free microtubule minus-ends that are not capped by microtubule-nucleating proteins or other factors and protects microtubule minus-ends from depolymerization. In addition, it also reduces the velocity of microtubule polymerization. Through the microtubule cytoskeleton, also regulates the organization of cellular organelles including the Golgi and the early endosomes. Essential for the tethering, but not for nucleation of non-centrosomal microtubules at the Golgi: together with Golgi-associated proteins AKAP9 and PDE4DIP, required to tether non-centrosomal minus-end microtubules to the Golgi, an important step for polarized cell movement. Also acts as a regulator of neuronal polarity and development: localizes to non-centrosomal microtubule minus-ends in neurons and stabilizes non-centrosomal microtubules, which is required for neuronal polarity, axon specification and dendritic branch formation. Through the microtubule cytoskeleton, regulates the autophagosome transport. The protein is Calmodulin-regulated spectrin-associated protein 2 of Mus musculus (Mouse).